The primary structure comprises 257 residues: Enterotoxin type A (257 aa).

A signal peptide spans 1–27; sequence MKKTAFILLLFIALTWTTSPLVNGSEK. Residues cysteine 120 and cysteine 130 are joined by a disulfide bond. Zn(2+) contacts are provided by histidine 211, histidine 249, and aspartate 251.

Belongs to the staphylococcal/streptococcal toxin family. Monomer. Interacts with MHC class II molecules alpha/HLA-DRB1 and beta/HLA-DRA chains. The interaction with MHC-II molecules occurs at both zinc-dependent and zinc-independent sites. Interacts with T-cell receptor beta variable 7-9/TRBV7-9. Zn(2+) serves as cofactor.

The protein resides in the secreted. Staphylococcal enterotoxin that activates the host immune system by binding as unprocessed molecules to major histocompatibility (MHC) complex class II and T-cell receptor (TCR) molecules. In turn, waves of cellular activation, cytokine production, and migration into the lung tissue and airways occur via alphabeta T-cells. Also causes the intoxication staphylococcal food poisoning syndrome. The illness is characterized by high fever, hypotension, diarrhea, shock, and in some cases death. The protein is Enterotoxin type A (sea) of Staphylococcus aureus (strain Newman).